We begin with the raw amino-acid sequence, 402 residues long: Xylose/arabinose-binding protein XylF (402 aa).

The helical transmembrane segment at 38–58 (GIIAGVLAAFGAGFGSGYVTA) threads the bilayer.

The protein belongs to the bacterial solute-binding protein 2 family. In terms of assembly, the complex is composed of two ATP-binding proteins (XylG), two transmembrane proteins (XylH) and a solute-binding protein (XylF).

It is found in the cell membrane. Functionally, part of the ABC transporter complex XylFGH involved in the uptake of xylose and arabinose. The protein is Xylose/arabinose-binding protein XylF of Sulfolobus acidocaldarius (strain ATCC 33909 / DSM 639 / JCM 8929 / NBRC 15157 / NCIMB 11770).